The chain runs to 465 residues: FAD-dependent oxidoreductase pigF (465 aa).

Residues 1–17 form the signal peptide; the sequence is MMLLTLLILSSVGLAAA. Residues Asn-95, Asn-138, Asn-260, and Asn-327 are each glycosylated (N-linked (GlcNAc...) asparagine). A lipid anchor (GPI-anchor amidated aspartate) is attached at Asp-444. Residues 445–465 constitute a propeptide, removed in mature form; it reads SASGIWNLTNAVVLPGLLTGL. An N-linked (GlcNAc...) asparagine glycan is attached at Asn-451.

This sequence belongs to the beta-cyclopiazonate dehydrogenase family. It depends on FAD as a cofactor.

It is found in the cell membrane. It participates in secondary metabolite biosynthesis. Functionally, FAD-dependent oxidoreductase; part of the gene cluster that mediates the biosynthesis of azaphilone pigments (MonAzPs), a complex mixture of compounds with a common azaphilone skeleton very widely used as food colorants. Within the pathway, pigF desaturates C6(7) to afford the orange and red pigments from yellow pigments. The first step of the pathway is performed by the nrPKS pigA that forms the hexaketide precursor from successive condensations of five malonyl-CoA units, with a simple acetyl-CoA starter unit. The role of esterase pigG is not clear, but it may play at most a supplementary role in the formation of the benzaldehyde produced by the pigA nrPKS. This very reactive benzaldehyde is intercepted by the pigC ketoreductase that to provide the first stable enzyme-free MonAzPs intermediate, 6-(4-hydroxy-2-oxopentyl)-3-methyl-2,4-dioxocyclohexane carbaldehyde, also known as M7PKS-1. The FAD-dependent monooxygenase pigN hydroxylates M7PKS-1 at C-4, which triggers the formation of the pyran ring. PigJ, pigK and pigD are involved in the acetylation of the pyran ring. PigJ and pigK form the two subunits of a dedicated fungal FAS that produces the side chain fatty acyl moiety of MonAzPs and pigD transfers the fatty acyl chain to the C-4 alcohol. PigM and pigO are involved in the elimination of the omega-1 alcohol. PigM acts as an O-acetyltransferase that synthesizes the putative O-11 acetyl intermediate whereas pigO eliminates acetic acid to yield an intermediate with a C10(11) double bond. The dehydration of the C-11 alcohol followed by the reduction of the C6(7) double bond by the NAD(P)H-dependent oxidoreductase pigE increases the electrophilicity of the C-5 ketone of the resulting acyl benzopyran. This in turn sets up the C-5 ketone for an intramolecular Knoevenagel aldol condensation with the C-20 enol of the side chain. This condensation affords the characteristic linear tricyclic carbon skeletons of the yellow pigments that serve as the common precursors for the classical yellow pigments monascin and ankaflavin, orange pigments rubopunctatin and monascorubrin, and red pigments ribropunctamine and monascorubramine. The FAD-dependent oxidoreductase pigF is especially invoved in the biosynthesis of orange and red pigments via desaturation of C6(7). The chain is FAD-dependent oxidoreductase pigF from Monascus ruber (Mold).